Here is a 332-residue protein sequence, read N- to C-terminus: Beta-1,3-N-acetylglucosaminyltransferase radical fringe (332 aa).

Topologically, residues 1–6 (MSRARR) are cytoplasmic. A helical; Signal-anchor for type II membrane protein membrane pass occupies residues 7 to 29 (VLCRACLALAAVLAVLLLLPLPL). The Lumenal segment spans residues 30-332 (PLPLPRAPAP…MKNRVEGAFQ (303 aa)). Arg-75 contributes to the substrate binding site. Residue Asn-114 is glycosylated (N-linked (GlcNAc...) asparagine). 2 disulfide bridges follow: Cys-115-Cys-126 and Cys-144-Cys-208. Asp-148 lines the substrate pocket. Asp-149 contacts Mn(2+). Residue Asp-238 is part of the active site. His-262 provides a ligand contact to Mn(2+). A disulfide bond links Cys-312 and Cys-321.

Belongs to the glycosyltransferase 31 family. Mn(2+) serves as cofactor. As to expression, detected in all the examined tissues (12.5 dpc). High expression found in adult brain.

It is found in the golgi apparatus membrane. The catalysed reaction is 3-O-(alpha-L-fucosyl)-L-threonyl-[EGF-like domain protein] + UDP-N-acetyl-alpha-D-glucosamine = 3-O-(N-acetyl-beta-D-glucosaminyl-(1-&gt;3)-alpha-L-fucosyl)-L-threonyl-[EGF-like domain protein] + UDP + H(+). The enzyme catalyses 3-O-(alpha-L-fucosyl)-L-seryl-[EGF-like domain protein] + UDP-N-acetyl-alpha-D-glucosamine = 3-O-(N-acetyl-beta-D-glucosaminyl-(1-&gt;3)-alpha-L-fucosyl)-L-seryl-[EGF-like domain protein] + UDP + H(+). Its function is as follows. Glycosyltransferase that initiates the elongation of O-linked fucose residues attached to EGF-like repeats in the extracellular domain of Notch molecules. Modulates NOTCH1 activity by modifying O-fucose residues at specific EGF-like domains resulting in enhancement of NOTCH1 activation by DLL1 and JAG1. May be involved in limb formation and in neurogenesis. In Mus musculus (Mouse), this protein is Beta-1,3-N-acetylglucosaminyltransferase radical fringe.